Consider the following 1061-residue polypeptide: Ribonuclease 3 (1061 aa).

Disordered stretches follow at residues 1–20 (MDFTEIHKRSRRKKFQQIHQ) and 149–244 (PLHS…SYNE). Over residues 156-173 (KTPERKENEEDSDSEIRS) the composition is skewed to basic and acidic residues. RNase III domains follow at residues 586 to 759 (LSVF…LDSG) and 811 to 935 (FHRL…VDKG). Residues Glu-851, Asp-921, and Glu-924 each coordinate Mg(2+). In terms of domain architecture, DRBM spans 962–1037 (DAKSHLQQWC…AENALAALEK (76 aa)).

It belongs to the ribonuclease III family. Mg(2+) is required as a cofactor. Mn(2+) serves as cofactor.

Its subcellular location is the nucleus. It carries out the reaction Endonucleolytic cleavage to 5'-phosphomonoester.. Functionally, executes the initial step of microRNA (miRNA) processing in the nucleus, that is the cleavage of pri-miRNA to release pre-miRNA. Involved in pre-rRNA processing. Cleaves double-strand RNA and does not cleave single-strand RNA. Involved in fertility. Required for the function or synthesis of the let-7 miRNA. In Caenorhabditis briggsae, this protein is Ribonuclease 3.